We begin with the raw amino-acid sequence, 106 residues long: ATP-dependent Clp protease adapter protein ClpS (106 aa).

It belongs to the ClpS family. In terms of assembly, binds to the N-terminal domain of the chaperone ClpA.

Involved in the modulation of the specificity of the ClpAP-mediated ATP-dependent protein degradation. This is ATP-dependent Clp protease adapter protein ClpS from Escherichia coli O127:H6 (strain E2348/69 / EPEC).